The sequence spans 252 residues: Protein BTG3 (252 aa).

The disordered stretch occupies residues 138–162 (VTSDYHSGSSSSDEDTSKEVEVKPS).

The protein belongs to the BTG family. As to expression, highly expressed in the brain.

In terms of biological role, overexpression impairs serum-induced cell cycle progression from the G0/G1 to S phase. This chain is Protein BTG3, found in Rattus norvegicus (Rat).